The following is a 132-amino-acid chain: Putative RNase AF_0947 (132 aa).

Active-site residues include arginine 91 and histidine 96. An RX(4)HXY motif motif is present at residues 91–98 (RNAIAHHY). Position 98 is an O-di-AMP-tyrosine (tyrosine 98).

Belongs to the HepT RNase toxin family. Homodimer, probably forms a complex with cognate antitoxin AF_0948. In terms of processing, modified by cognate antitoxin AF_0948; probably at least 2 successive AMPylation events occur on Tyr-98.

In terms of biological role, probable toxic component of a putative type VII toxin-antitoxin (TA) system, probably an RNase. Probably neutralized by cognate antitoxin AF_0948. Neutralization may be due to AMPylation by AF_0948. In Archaeoglobus fulgidus (strain ATCC 49558 / DSM 4304 / JCM 9628 / NBRC 100126 / VC-16), this protein is Putative RNase AF_0947.